Consider the following 307-residue polypeptide: Elongation factor Ts (307 aa).

Residues Thr-80–Val-83 form an involved in Mg(2+) ion dislocation from EF-Tu region.

This sequence belongs to the EF-Ts family.

The protein resides in the cytoplasm. In terms of biological role, associates with the EF-Tu.GDP complex and induces the exchange of GDP to GTP. It remains bound to the aminoacyl-tRNA.EF-Tu.GTP complex up to the GTP hydrolysis stage on the ribosome. The sequence is that of Elongation factor Ts from Albidiferax ferrireducens (strain ATCC BAA-621 / DSM 15236 / T118) (Rhodoferax ferrireducens).